The following is a 101-amino-acid chain: Replication restart protein PriB (101 aa).

The 101-residue stretch at 1 to 101 folds into the SSB domain; sequence MATNHLVLSG…LHAENVELKT (101 aa).

Belongs to the PriB family. As to quaternary structure, homodimer. Interacts with PriA and DnaT. Component of the replication restart primosome. Primosome assembly occurs via a 'hand-off' mechanism. PriA binds to replication forks, subsequently PriB then DnaT bind; DnaT then displaces ssDNA to generate the helicase loading substrate.

Its function is as follows. Involved in the restart of stalled replication forks, which reloads the replicative helicase on sites other than the origin of replication; the PriA-PriB pathway is the major replication restart pathway. During primosome assembly it facilitates complex formation between PriA and DnaT on DNA; stabilizes PriA on DNA. Stimulates the DNA unwinding activity of PriA helicase. This is Replication restart protein PriB from Shewanella woodyi (strain ATCC 51908 / MS32).